Here is a 366-residue protein sequence, read N- to C-terminus: NADP-dependent oxidoreductase domain-containing protein 1 (366 aa).

It belongs to the pyrroline-5-carboxylate reductase family.

Functionally, probable oxidoreductase. The chain is NADP-dependent oxidoreductase domain-containing protein 1 (Noxred1) from Mus musculus (Mouse).